The sequence spans 949 residues: MASISDDGMALSGYLKKLKTMKKKFFVLYEETSHSAARLEYYDSEKKFLQRAEPKRVIYLKNCFNINRRLDTKHRFVIVLSSRDGGFGIVLENENDLRKWLDKLLVLQRNIANSNGTAHSPYDQVWQVVIQKKGISEKVGITGTYHCCLTSKSLTFVCIGPEKTPNGEDRVASIEILLTTIRRCGHASPQCIFYVELGRQSVLGSGDLWMETDNAAVATNMHNTILSAMSAKTESNTNLINVYQNRPDLSHEPMRKRSSSANEASKPINVNVIQNSQNSLEFRSCSSPHNYGFGRERCDSLPTRNGTLSESSNQTYFGSNHGLRSNTISGNRPHSTNKHSNSPTFTMPLRCSESEESSISVEESDDNGSYSHYRLNTRTSETAIPEENIDDFASAEFSKVTEPNESDENYIPMTPINPTDAIHEKEKIDMQRLEDASLHFDFPEHASEKLAKDYDLDSDNQCVRPIRAYSIGNKVEHLKFNKRLGHLNDTGQNPNRVRAYSVGSKSKIPRCDLQRVVLVEDNKHEFVANRSQSSITKEGSGYGTSGNRQKKSTSAPLLSLKNQINSDRMSDLMEIDFSQASNLEKQKFIKNNEIPKYIENVFPKTPRTDSSSLTLHATSQKDIFNGTKLNNTANTSEDGYLEMKPVGNAYTPSSNCLPIKVEKLKLSDYTAPLTTAAPVHDLNKISTYNISAEKWREQTTSEEKKSNSPLNEKPFSLKPTNVENISHDVHSTNNIDCEQVSVQSDKQNNLDDKIVENNNLDIGGHEEKKLVHSISSEDYTQIKDKSNDFTKFNEAGYKILQIKSDSSLISSKLYQKGIHKDNLERSHRLTESVNTIPDNATASSSVTKFNINAKAADSRSTDPSTPQNILQIKDLNFPSRSSSRISQPELHYASLDLPHCSGQNPAKYLKRGSRESPPVSACPEDGNTYAKIDFDQSDSSSSSSNIFNT.

The PH domain maps to 8–109 (GMALSGYLKK…WLDKLLVLQR (102 aa)). One can recognise an IRS-type PTB domain in the interval 122–236 (YDQVWQVVIQ…SAMSAKTESN (115 aa)). Positions 247-270 (PDLSHEPMRKRSSSANEASKPINV) are disordered. Phosphoserine is present on residues Ser-286, Ser-287, and Ser-342. Over residues 304–345 (RNGTLSESSNQTYFGSNHGLRSNTISGNRPHSTNKHSNSPTF) the composition is skewed to polar residues. A disordered region spans residues 304-373 (RNGTLSESSN…SDDNGSYSHY (70 aa)). Tyr-410 carries the phosphotyrosine; by INSR modification. A YXXM motif 1 motif is present at residues 410 to 413 (YIPM). Positions 530–556 (RSQSSITKEGSGYGTSGNRQKKSTSAP) are disordered. Ser-554 carries the phosphoserine modification. The YXXM motif 2 motif lies at 640 to 643 (YLEM). The span at 696–706 (REQTTSEEKKS) shows a compositional bias: basic and acidic residues. Positions 696–718 (REQTTSEEKKSNSPLNEKPFSLK) are disordered. Tyr-892 bears the Phosphotyrosine; by INSR mark. The interval 906 to 949 (AKYLKRGSRESPPVSACPEDGNTYAKIDFDQSDSSSSSSNIFNT) is disordered. Phosphoserine occurs at positions 913 and 916. Tyr-929 carries the phosphotyrosine; by INSR modification. The segment covering 937-949 (SDSSSSSSNIFNT) has biased composition (low complexity).

As to quaternary structure, bindings to phosphatidylinositol 3-kinase and SHP2.

Activates phosphatidylinositol 3-kinase when bound to the regulatory p85 subunit. May mediate the control of various cellular processes by insulin-like peptides. When phosphorylated by the insulin receptor binds specifically to various cellular proteins containing SH2 domains. Involved in control of cell proliferation, cell size, and body and organ growth throughout development. Also has a role in a signaling pathway controlling the physiological response required to endure periods of low nutrient conditions. Insulin/insulin-like growth factor (IGF) signaling pathway has a role in regulating aging and is necessary in the ovary for vitellogenic maturation. The sequence is that of Insulin receptor substrate 1 from Drosophila yakuba (Fruit fly).